We begin with the raw amino-acid sequence, 543 residues long: T-complex protein 1 subunit eta (543 aa).

Met1 is subject to N-acetylmethionine. Gly41 provides a ligand contact to ADP. Gly41 provides a ligand contact to ATP. Residue Lys67 is modified to N6-acetyllysine. Asp92 is a Mg(2+) binding site. Positions 93, 94, 95, 96, 164, and 165 each coordinate ADP. An ATP-binding site is contributed by Gly93. Ser96 is a binding site for ATP. Lys250 and Lys320 each carry N6-acetyllysine. ATP is bound by residues Arg398 and Gly409. Gly409 is an ADP binding site. Residue Lys430 forms a Glycyl lysine isopeptide (Lys-Gly) (interchain with G-Cter in SUMO2) linkage. Glu494 and Arg499 together coordinate ADP. Arg499 provides a ligand contact to ATP. The tract at residues 524 to 543 (RSTVDAPTAAGRGRGRGRPH) is disordered. An Omega-N-methylarginine modification is found at Arg535.

The protein belongs to the TCP-1 chaperonin family. Component of the chaperonin-containing T-complex (TRiC), a hexadecamer composed of two identical back-to-back stacked rings enclosing a protein folding chamber. Each ring is made up of eight different subunits: TCP1/CCT1, CCT2, CCT3, CCT4, CCT5, CCT6A/CCT6, CCT7, CCT8. Interacts with PACRG. Interacts with DLEC1.

The protein localises to the cytoplasm. It catalyses the reaction ATP + H2O = ADP + phosphate + H(+). In terms of biological role, component of the chaperonin-containing T-complex (TRiC), a molecular chaperone complex that assists the folding of actin, tubulin and other proteins upon ATP hydrolysis. The TRiC complex mediates the folding of WRAP53/TCAB1, thereby regulating telomere maintenance. This Homo sapiens (Human) protein is T-complex protein 1 subunit eta (CCT7).